A 191-amino-acid chain; its full sequence is Inosine triphosphate pyrophosphatase (191 aa).

Thr12–Lys17 is a binding site for ITP. Position 42 (Glu42) interacts with Mg(2+). Residues Lys54, Asp70–Thr71, Lys87, Phe145–Asp148, Lys168, and His173–Arg174 each bind ITP.

The protein belongs to the HAM1 NTPase family. Homodimer. The cofactor is Mg(2+). Mn(2+) serves as cofactor.

It is found in the cytoplasm. It carries out the reaction ITP + H2O = IMP + diphosphate + H(+). It catalyses the reaction dITP + H2O = dIMP + diphosphate + H(+). The catalysed reaction is XTP + H2O = XMP + diphosphate + H(+). Functionally, pyrophosphatase that hydrolyzes non-canonical purine nucleotides such as inosine triphosphate (ITP), deoxyinosine triphosphate (dITP) or xanthosine 5'-triphosphate (XTP) to their respective monophosphate derivatives. The enzyme does not distinguish between the deoxy- and ribose forms. Probably excludes non-canonical purines from RNA and DNA precursor pools, thus preventing their incorporation into RNA and DNA and avoiding chromosomal lesions. In Phytophthora infestans (strain T30-4) (Potato late blight agent), this protein is Inosine triphosphate pyrophosphatase.